The chain runs to 204 residues: FMN-dependent NADH:quinone oxidoreductase (204 aa).

FMN-binding positions include Ser10, 16–18 (SIS), and 96–99 (MYNF).

The protein belongs to the azoreductase type 1 family. Homodimer. Requires FMN as cofactor.

It carries out the reaction 2 a quinone + NADH + H(+) = 2 a 1,4-benzosemiquinone + NAD(+). The catalysed reaction is N,N-dimethyl-1,4-phenylenediamine + anthranilate + 2 NAD(+) = 2-(4-dimethylaminophenyl)diazenylbenzoate + 2 NADH + 2 H(+). Quinone reductase that provides resistance to thiol-specific stress caused by electrophilic quinones. Functionally, also exhibits azoreductase activity. Catalyzes the reductive cleavage of the azo bond in aromatic azo compounds to the corresponding amines. This is FMN-dependent NADH:quinone oxidoreductase from Herminiimonas arsenicoxydans.